Here is a 295-residue protein sequence, read N- to C-terminus: uncharacterized protein (295 aa).

The protein localises to the plastid. Its subcellular location is the chloroplast. This is an uncharacterized protein from Euglena gracilis.